Consider the following 190-residue polypeptide: Peptidyl-tRNA hydrolase (190 aa).

Residue tyrosine 14 coordinates tRNA. Catalysis depends on histidine 19, which acts as the Proton acceptor. TRNA contacts are provided by tyrosine 64, asparagine 66, and asparagine 112.

Belongs to the PTH family. As to quaternary structure, monomer.

Its subcellular location is the cytoplasm. It carries out the reaction an N-acyl-L-alpha-aminoacyl-tRNA + H2O = an N-acyl-L-amino acid + a tRNA + H(+). Hydrolyzes ribosome-free peptidyl-tRNAs (with 1 or more amino acids incorporated), which drop off the ribosome during protein synthesis, or as a result of ribosome stalling. Functionally, catalyzes the release of premature peptidyl moieties from peptidyl-tRNA molecules trapped in stalled 50S ribosomal subunits, and thus maintains levels of free tRNAs and 50S ribosomes. This chain is Peptidyl-tRNA hydrolase, found in Pelodictyon phaeoclathratiforme (strain DSM 5477 / BU-1).